Here is a 1337-residue protein sequence, read N- to C-terminus: Nucleoporin POM152 (1337 aa).

A disordered region spans residues 1–48 (MEHRYNVFNDTPRGNHWMGSSVSGSPRPSYSSRPNVNTTRRFQYSDDE). Over 1 to 110 (MEHRYNVFND…TDVLEISKQR (110 aa)) the chain is Cytoplasmic. The segment at 1-175 (MEHRYNVFND…SFNIPRLTFK (175 aa)) is pore side. A compositionally biased stretch (low complexity) spans 19–37 (GSSVSGSPRPSYSSRPNVN). Phosphoserine is present on residues Ser-45 and Ser-60. Residues 111 to 131 (TFAVILFLIIQCYKIYDLVIL) form a helical membrane-spanning segment. Residues 132 to 148 (KSGLPLSGLLFKNYRFN) lie on the Perinuclear space side of the membrane. Residues 149–169 (FISKYFIIDSFFLYVLPSFNI) form a helical membrane-spanning segment. Residues 170-172 (PRL) are Cytoplasmic-facing. A helical transmembrane segment spans residues 173-193 (TFKPWVVYLQILAMLLLNIFI). Topologically, residues 194–1337 (SSDHEFVLIS…FAKNDLFFNN (1144 aa)) are perinuclear space. Positions 196–1337 (DHEFVLISLI…FAKNDLFFNN (1142 aa)) are cisternal side. An N-linked (GlcNAc...) asparagine glycan is attached at Asn-280. Tandem repeats lie at residues 390-413 (DRCIGDSDNVSFEIQGVPPMKLAY), 626-650 (DQCVGQVGLNFELSFTGAPPYYYNT), 732-755 (KLCLGDHSSVPVALKGQGPFTLTY), 836-859 (KIKHGSVTEIPLKLSGEGPFTVKF), 943-966 (EVCQGMEGTVDLALFGSPPFILEY), 1058-1077 (FLEPINLKFLQGESPFSITF), 1157-1178 (EYCVGDYVAYQLNGVAPFMIKY), and 1253-1276 (DIREGDQAEVIFSFEGTPPFSLTY). The segment at 390-1276 (DRCIGDSDNV…EGTPPFSLTY (887 aa)) is 8 X 24 AA approximate repeats.

As to quaternary structure, component of the nuclear pore complex (NPC). NPC constitutes the exclusive means of nucleocytoplasmic transport. NPCs allow the passive diffusion of ions and small molecules and the active, nuclear transport receptor-mediated bidirectional transport of macromolecules such as proteins, RNAs, ribonucleoparticles (RNPs), and ribosomal subunits across the nuclear envelope. Due to its 8-fold rotational symmetry, all subunits are present with 8 copies or multiples thereof. Interacts with NUP188. Post-translationally, the N-terminus is blocked. Phosphorylated by CDC28.

The protein resides in the nucleus. It is found in the nuclear pore complex. Its subcellular location is the nucleus membrane. Functionally, functions as a component of the nuclear pore complex (NPC). NPC components, collectively referred to as nucleoporins (NUPs), can play the role of both NPC structural components and of docking or interaction partners for transiently associated nuclear transport factors. POM152 is important for the de novo assembly of NPCs. The protein is Nucleoporin POM152 (POM152) of Saccharomyces cerevisiae (strain ATCC 204508 / S288c) (Baker's yeast).